Reading from the N-terminus, the 137-residue chain is Protein MGF 110-7L (137 aa).

The signal sequence occupies residues Met-1 to Ser-20. N-linked (GlcNAc...) asparagine; by host glycosylation is found at Asn-69, Asn-70, and Asn-105.

This sequence belongs to the asfivirus MGF 110 family.

In terms of biological role, plays a role in virus cell tropism, and may be required for efficient virus replication in macrophages. The sequence is that of Protein MGF 110-7L from African swine fever virus (isolate Pig/Kenya/KEN-50/1950) (ASFV).